The sequence spans 492 residues: 2-succinylbenzoate--CoA ligase (492 aa).

The protein belongs to the ATP-dependent AMP-binding enzyme family. MenE subfamily.

The enzyme catalyses 2-succinylbenzoate + ATP + CoA = 2-succinylbenzoyl-CoA + AMP + diphosphate. It participates in quinol/quinone metabolism; 1,4-dihydroxy-2-naphthoate biosynthesis; 1,4-dihydroxy-2-naphthoate from chorismate: step 5/7. It functions in the pathway quinol/quinone metabolism; menaquinone biosynthesis. Converts 2-succinylbenzoate (OSB) to 2-succinylbenzoyl-CoA (OSB-CoA). In Staphylococcus aureus (strain MRSA252), this protein is 2-succinylbenzoate--CoA ligase.